An 82-amino-acid polypeptide reads, in one-letter code: Teratocyte protein CftICK-IV (82 aa).

The N-terminal stretch at 1–21 is a signal peptide; that stretch reads MAKILLTFIILTCLIVTITPA.

Contains 4 disulfide bonds. As to expression, abundantly expressed by teratocytes, which are extra-embryonic cells released by parasitoid wasps into their hosts during larval eclosion.

The protein resides in the secreted. Its function is as follows. This endoparasitoid wasp peptide has immununosuppressive and insecticidal activities. Suppress cellular immunity which is detectable as a reduction of hemocyte spread index in the host. In vivo, ingestion of this peptide moderately reduces leaf consumption of D.saccharalis, a permissive host for the lepidoptere C.flavipes. In Cotesia flavipes (Parasitic wasp), this protein is Teratocyte protein CftICK-IV.